Reading from the N-terminus, the 356-residue chain is MLYWLAEWLGFPGALNLIRYLSFRSGAAVATAMILGLWIGPRFILMLRMRQGKGQPIRDDGPQSHLAKKGTPTMGGLMILISLMISALLWMDLSNRFVWACLFVTAGFAVVGFLDDYDKVTKSSHRGIPGRVRLLVEFLIAGVAVLLIVSRTGTDLYLPFFSGIVIPLGPFYYVFAMVLIVGFGNAVNLTDGLDGLATFPVIIASLTFLVIVYLSGNVKFAGYLGIPHVPGAGELAVFAAAIIGACLAFLWFNAPPAAVFMGDTGSLALGGALATIAVTAQHELVLVLVGGLFVVEALSVIIQVFWYKRTGKRVFRMAPIHHHFEQLGWPESTVVIRFWIVSIVLALAGLATLKLR.

Transmembrane regions (helical) follow at residues 27 to 47 (AAVATAMILGLWIGPRFILML), 73 to 93 (TMGGLMILISLMISALLWMDL), 97 to 117 (FVWACLFVTAGFAVVGFLDDY), 134 to 154 (LLVEFLIAGVAVLLIVSRTGT), 163 to 183 (GIVIPLGPFYYVFAMVLIVGF), 195 to 215 (GLATFPVIIASLTFLVIVYLS), 232 to 252 (AGELAVFAAAIIGACLAFLWF), 258 to 278 (AVFMGDTGSLALGGALATIAV), 285 to 305 (VLVLVGGLFVVEALSVIIQVF), and 333 to 353 (TVVIRFWIVSIVLALAGLATL).

Belongs to the glycosyltransferase 4 family. MraY subfamily. Requires Mg(2+) as cofactor.

The protein resides in the cell inner membrane. The enzyme catalyses UDP-N-acetyl-alpha-D-muramoyl-L-alanyl-gamma-D-glutamyl-meso-2,6-diaminopimeloyl-D-alanyl-D-alanine + di-trans,octa-cis-undecaprenyl phosphate = di-trans,octa-cis-undecaprenyl diphospho-N-acetyl-alpha-D-muramoyl-L-alanyl-D-glutamyl-meso-2,6-diaminopimeloyl-D-alanyl-D-alanine + UMP. The protein operates within cell wall biogenesis; peptidoglycan biosynthesis. Catalyzes the initial step of the lipid cycle reactions in the biosynthesis of the cell wall peptidoglycan: transfers peptidoglycan precursor phospho-MurNAc-pentapeptide from UDP-MurNAc-pentapeptide onto the lipid carrier undecaprenyl phosphate, yielding undecaprenyl-pyrophosphoryl-MurNAc-pentapeptide, known as lipid I. The sequence is that of Phospho-N-acetylmuramoyl-pentapeptide-transferase from Sphingopyxis alaskensis (strain DSM 13593 / LMG 18877 / RB2256) (Sphingomonas alaskensis).